Reading from the N-terminus, the 372-residue chain is N-methyl-L-tryptophan oxidase (372 aa).

Residue 4 to 34 (DLIIIGSGSVGAAAGYYATRAGLKVLMTDAH) participates in FAD binding. Cys-307 carries the post-translational modification S-8alpha-FAD cysteine.

This sequence belongs to the MSOX/MTOX family. MTOX subfamily. Monomer. FAD serves as cofactor.

The enzyme catalyses N(alpha)-methyl-L-tryptophan + O2 + H2O = L-tryptophan + formaldehyde + H2O2. Catalyzes the oxidative demethylation of N-methyl-L-tryptophan. The sequence is that of N-methyl-L-tryptophan oxidase from Salmonella heidelberg (strain SL476).